The sequence spans 482 residues: Membrane-bound lytic murein transglycosylase F (482 aa).

An N-terminal signal peptide occupies residues 1-13 (MKGLFLRIITALA). Positions 14–267 (LLFWAIDMVF…NLKEKYLGHI (254 aa)) are non-LT domain. The interval 268–482 (SQFDYVDTRS…NLEEIKENKD (215 aa)) is LT domain. Glu-312 is a catalytic residue.

It in the N-terminal section; belongs to the bacterial solute-binding protein 3 family. This sequence in the C-terminal section; belongs to the transglycosylase Slt family.

It localises to the cell outer membrane. It catalyses the reaction Exolytic cleavage of the (1-&gt;4)-beta-glycosidic linkage between N-acetylmuramic acid (MurNAc) and N-acetylglucosamine (GlcNAc) residues in peptidoglycan, from either the reducing or the non-reducing ends of the peptidoglycan chains, with concomitant formation of a 1,6-anhydrobond in the MurNAc residue.. Its function is as follows. Murein-degrading enzyme that degrades murein glycan strands and insoluble, high-molecular weight murein sacculi, with the concomitant formation of a 1,6-anhydromuramoyl product. Lytic transglycosylases (LTs) play an integral role in the metabolism of the peptidoglycan (PG) sacculus. Their lytic action creates space within the PG sacculus to allow for its expansion as well as for the insertion of various structures such as secretion systems and flagella. This chain is Membrane-bound lytic murein transglycosylase F, found in Haemophilus influenzae (strain PittEE).